Consider the following 51-residue polypeptide: Large ribosomal subunit protein eL39 (51 aa).

It belongs to the eukaryotic ribosomal protein eL39 family.

In Drosophila melanogaster (Fruit fly), this protein is Large ribosomal subunit protein eL39 (RpL39).